A 38-amino-acid polypeptide reads, in one-letter code: Photosystem II reaction center protein L (38 aa).

A helical transmembrane segment spans residues 17 to 37 (SLYWGLLLIFVLAVPFSNYFF).

This sequence belongs to the PsbL family. In terms of assembly, PSII is composed of 1 copy each of membrane proteins PsbA, PsbB, PsbC, PsbD, PsbE, PsbF, PsbH, PsbI, PsbJ, PsbK, PsbL, PsbM, PsbT, PsbX, PsbY, PsbZ, Psb30/Ycf12, at least 3 peripheral proteins of the oxygen-evolving complex and a large number of cofactors. It forms dimeric complexes.

The protein localises to the plastid. Its subcellular location is the chloroplast thylakoid membrane. In terms of biological role, one of the components of the core complex of photosystem II (PSII). PSII is a light-driven water:plastoquinone oxidoreductase that uses light energy to abstract electrons from H(2)O, generating O(2) and a proton gradient subsequently used for ATP formation. It consists of a core antenna complex that captures photons, and an electron transfer chain that converts photonic excitation into a charge separation. This subunit is found at the monomer-monomer interface and is required for correct PSII assembly and/or dimerization. In Cedrus deodara (Deodar cedar), this protein is Photosystem II reaction center protein L.